Consider the following 138-residue polypeptide: MAPK kinase substrate protein At1g80180 (138 aa).

The tract at residues 52–138 is disordered; the sequence is TSEVQDQTTK…RKRPAKRRSR (87 aa). The segment covering 69-81 has biased composition (basic and acidic residues); it reads KPIRTDGGMERSR. Ser98 is subject to Phosphoserine. A Phosphoserine; by MAPK6 modification is found at Ser105. A compositionally biased stretch (basic residues) spans 121–138; sequence QPGKKVNQRKRPAKRRSR.

Expressed in developing cotyledons, mature cotyledons, cotyledon epidermis and stomata.

In terms of biological role, may play a role in the regulation of stomata patterning. The polypeptide is MAPK kinase substrate protein At1g80180 (Arabidopsis thaliana (Mouse-ear cress)).